The primary structure comprises 259 residues: Dihydroorotate dehydrogenase B (NAD(+)), electron transfer subunit (259 aa).

One can recognise an FAD-binding FR-type domain in the interval 1–101 (MKIEDCTVEE…MGPLGRGYDV (101 aa)). FAD-binding positions include 52–55 (RPIS), 69–71 (IYR), and 76–77 (GT). The [2Fe-2S] cluster site is built by C223, C228, C231, and C245.

This sequence belongs to the PyrK family. In terms of assembly, heterotetramer of 2 PyrK and 2 PyrD type B subunits. It depends on [2Fe-2S] cluster as a cofactor. The cofactor is FAD.

It participates in pyrimidine metabolism; UMP biosynthesis via de novo pathway; orotate from (S)-dihydroorotate (NAD(+) route): step 1/1. Responsible for channeling the electrons from the oxidation of dihydroorotate from the FMN redox center in the PyrD type B subunit to the ultimate electron acceptor NAD(+). The protein is Dihydroorotate dehydrogenase B (NAD(+)), electron transfer subunit of Fusobacterium nucleatum subsp. nucleatum (strain ATCC 25586 / DSM 15643 / BCRC 10681 / CIP 101130 / JCM 8532 / KCTC 2640 / LMG 13131 / VPI 4355).